A 62-amino-acid polypeptide reads, in one-letter code: Conotoxin Gm5.2 (62 aa).

An N-terminal signal peptide occupies residues 1–22; it reads MRCLPVFVILLLLIASAPSVDA. A propeptide spanning residues 23-49 is cleaved from the precursor; it reads QPKTKDDVPLAPLHDNIRSTLQTLRKK. Ser60 bears the Serine amide mark.

This sequence belongs to the conotoxin T superfamily. In terms of processing, contains 2 disulfide bonds that can be either 'C1-C3, C2-C4' or 'C1-C4, C2-C3', since these disulfide connectivities have been observed for conotoxins with cysteine framework V (for examples, see AC P0DQQ7 and AC P81755). As to expression, expressed by the venom duct.

Its subcellular location is the secreted. This chain is Conotoxin Gm5.2, found in Conus gloriamaris (Glory-of-the-Sea cone).